The primary structure comprises 321 residues: uncharacterized protein (321 aa).

Residues 1 to 5 lie on the Cytoplasmic side of the membrane; that stretch reads MKQQA. Residues 6 to 26 form a helical membrane-spanning segment; it reads GIGILLALTTAICWGALPIAM. The region spanning 17 to 144 is the EamA 1 domain; the sequence is ICWGALPIAM…LLSGLVMFFN (128 aa). Over 27 to 35 the chain is Periplasmic; sequence KQVLEVMEP. Residues 36 to 56 traverse the membrane as a helical segment; it reads PTIVFYRFLMASIGLGAILAV. Over 57–70 the chain is Cytoplasmic; that stretch reads KKRLPPLRVFRKPR. Residues 71 to 91 form a helical membrane-spanning segment; the sequence is WLILLAVATAGLFGNFILFSS. Residues 92 to 99 are Periplasmic-facing; the sequence is SLQYLSPT. Residues 100–120 traverse the membrane as a helical segment; the sequence is ASQVIGQLSPVGMMVASVFIL. The Cytoplasmic portion of the chain corresponds to 121-130; the sequence is KEKMRSTQVV. The chain crosses the membrane as a helical span at residues 131–151; it reads GALMLLSGLVMFFNTSLVEIF. Over 152-156 the chain is Periplasmic; it reads TKLTD. The helical transmembrane segment at 157 to 177 threads the bilayer; it reads YTWGVIFGVGAATVWVSYGVA. One can recognise an EamA 2 domain in the interval 169-292; the sequence is TVWVSYGVAQ…GYLGAFVVVA (124 aa). At 178 to 190 the chain is on the cytoplasmic side; it reads QKVLLRRLASPQI. The chain crosses the membrane as a helical span at residues 191 to 211; the sequence is LFLLYTLCTIALFPLAKPGVI. Residues 212 to 216 are Periplasmic-facing; the sequence is AQLSH. The helical transmembrane segment at 217-237 threads the bilayer; it reads WQLACLIFCGLNTLVGYGALA. Over 238 to 249 the chain is Cytoplasmic; the sequence is EAMARWQAAQVS. A helical membrane pass occupies residues 250–270; it reads AIITLTPLFTLFFSDLLSLAW. At 271–278 the chain is on the periplasmic side; the sequence is PDFFARPM. A helical transmembrane segment spans residues 279 to 299; that stretch reads LNLLGYLGAFVVVAGAMYSAI. The Cytoplasmic portion of the chain corresponds to 300–321; it reads GHRIWGGLRKHTTVVSQPRAGE.

Belongs to the EamA transporter family.

It localises to the cell inner membrane. This is an uncharacterized protein from Escherichia coli O157:H7.